Here is a 637-residue protein sequence, read N- to C-terminus: Threonine--tRNA ligase (637 aa).

The TGS domain maps to 1–61 (MIKVTLKDGK…DKDCNLEILT (61 aa)). Residues 242-532 (DHRKIGKELD…LIEHYAGAFP (291 aa)) form a catalytic region. Positions 333, 384, and 509 each coordinate Zn(2+).

Belongs to the class-II aminoacyl-tRNA synthetase family. In terms of assembly, homodimer. It depends on Zn(2+) as a cofactor.

The protein localises to the cytoplasm. The enzyme catalyses tRNA(Thr) + L-threonine + ATP = L-threonyl-tRNA(Thr) + AMP + diphosphate + H(+). Functionally, catalyzes the attachment of threonine to tRNA(Thr) in a two-step reaction: L-threonine is first activated by ATP to form Thr-AMP and then transferred to the acceptor end of tRNA(Thr). Also edits incorrectly charged L-seryl-tRNA(Thr). This is Threonine--tRNA ligase from Clostridium acetobutylicum (strain ATCC 824 / DSM 792 / JCM 1419 / IAM 19013 / LMG 5710 / NBRC 13948 / NRRL B-527 / VKM B-1787 / 2291 / W).